A 228-amino-acid polypeptide reads, in one-letter code: UPF0758 protein Gura_4138 (228 aa).

One can recognise an MPN domain in the interval 106-228 (RFTSPSQVFE…FLSFVDRGMM (123 aa)). Residues His177, His179, and Asp190 each coordinate Zn(2+). Positions 177–190 (HNHPTGDPTPSRED) match the JAMM motif motif.

Belongs to the UPF0758 family.

This chain is UPF0758 protein Gura_4138, found in Geotalea uraniireducens (strain Rf4) (Geobacter uraniireducens).